Reading from the N-terminus, the 526-residue chain is Na(+)/H(+) antiporter NhaB (526 aa).

10 consecutive transmembrane segments (helical) span residues Phe13–Pro33, Leu98–Phe118, Leu133–Val155, Leu208–Pro228, Phe244–Leu264, Ala309–Ile329, Glu355–Glu375, Leu395–Gly415, Val452–Leu472, and Val481–Phe501.

It belongs to the NhaB Na(+)/H(+) (TC 2.A.34) antiporter family.

It is found in the cell inner membrane. The enzyme catalyses 2 Na(+)(in) + 3 H(+)(out) = 2 Na(+)(out) + 3 H(+)(in). Functionally, na(+)/H(+) antiporter that extrudes sodium in exchange for external protons. This Serratia proteamaculans (strain 568) protein is Na(+)/H(+) antiporter NhaB.